The chain runs to 272 residues: HMP-PP phosphatase (272 aa).

Asp8 functions as the Nucleophile in the catalytic mechanism. Residues Asp8, Asp10, and Asp212 each coordinate Mg(2+).

It belongs to the HAD-like hydrolase superfamily. Cof family. Requires Mg(2+) as cofactor.

The enzyme catalyses 4-amino-2-methyl-5-(diphosphooxymethyl)pyrimidine + H2O = 4-amino-2-methyl-5-(phosphooxymethyl)pyrimidine + phosphate + H(+). In terms of biological role, catalyzes the hydrolysis of 4-amino-2-methyl-5-hydroxymethylpyrimidine pyrophosphate (HMP-PP) to 4-amino-2-methyl-5-hydroxymethylpyrimidine phosphate (HMP-P). This chain is HMP-PP phosphatase, found in Salmonella schwarzengrund (strain CVM19633).